The chain runs to 260 residues: 3-deoxy-manno-octulosonate cytidylyltransferase (260 aa).

This sequence belongs to the KdsB family.

It localises to the cytoplasm. The enzyme catalyses 3-deoxy-alpha-D-manno-oct-2-ulosonate + CTP = CMP-3-deoxy-beta-D-manno-octulosonate + diphosphate. It functions in the pathway nucleotide-sugar biosynthesis; CMP-3-deoxy-D-manno-octulosonate biosynthesis; CMP-3-deoxy-D-manno-octulosonate from 3-deoxy-D-manno-octulosonate and CTP: step 1/1. The protein operates within bacterial outer membrane biogenesis; lipopolysaccharide biosynthesis. In terms of biological role, activates KDO (a required 8-carbon sugar) for incorporation into bacterial lipopolysaccharide in Gram-negative bacteria. This Polaromonas naphthalenivorans (strain CJ2) protein is 3-deoxy-manno-octulosonate cytidylyltransferase.